A 42-amino-acid polypeptide reads, in one-letter code: Potassium channel gamma toxin gamma-KTx 1.9 (42 aa).

4 disulfide bridges follow: C5–C23, C11–C34, C20–C39, and C24–C41.

The protein belongs to the ergtoxin family. Gamma-KTx 1 subfamily. Expressed by the venom gland.

The protein localises to the secreted. Blocks human voltage-gated potassium channel Kv11.1/KCNH2/ERG1 (IC(50)=16.9 nM). This Centruroides tecomanus (Scorpion) protein is Potassium channel gamma toxin gamma-KTx 1.9.